Here is a 168-residue protein sequence, read N- to C-terminus: Desumoylating isopeptidase 1 (168 aa).

One can recognise a PPPDE domain in the interval 7–149; that stretch reads YPVKLYVYDL…FGQALRPFLD (143 aa). Histidine 38 is a catalytic residue. The Nuclear export signal 1 motif lies at 83–91; the sequence is IFLEYLSSL. Residue cysteine 108 is part of the active site. Positions 139–153 match the Nuclear export signal 2 motif; the sequence is PFGQALRPFLDSIQI.

This sequence belongs to the DeSI family. As to quaternary structure, homodimer. Interacts with UBQLN4; leading to the export of UBQLN4 from the nucleus.

Its subcellular location is the cytoplasm. It is found in the nucleus. The catalysed reaction is S-hexadecanoyl-L-cysteinyl-[protein] + H2O = L-cysteinyl-[protein] + hexadecanoate + H(+). Functionally, protease which deconjugates SUMO1, SUMO2 and SUMO3 from some substrate proteins. Has isopeptidase but not SUMO-processing activity. Desumoylates ZBTB46. Collaborates with UBQLN4 in the export of ubiquitinated proteins from the nucleus to the cytoplasm. Exhibits palmitoyl protein thioesterase (S-depalmitoylation) activity towards synthetic substrates 4-methylumbelliferyl-6-S-palmitoyl-beta-D-glucopyranoside and S-depalmitoylation probe 5 (DPP-5). The chain is Desumoylating isopeptidase 1 (Desi1) from Rattus norvegicus (Rat).